The following is a 124-amino-acid chain: Large ribosomal subunit protein uL22 (124 aa).

Belongs to the universal ribosomal protein uL22 family. As to quaternary structure, part of the 50S ribosomal subunit.

Its function is as follows. This protein binds specifically to 23S rRNA; its binding is stimulated by other ribosomal proteins, e.g. L4, L17, and L20. It is important during the early stages of 50S assembly. It makes multiple contacts with different domains of the 23S rRNA in the assembled 50S subunit and ribosome. The globular domain of the protein is located near the polypeptide exit tunnel on the outside of the subunit, while an extended beta-hairpin is found that lines the wall of the exit tunnel in the center of the 70S ribosome. The chain is Large ribosomal subunit protein uL22 from Buchnera aphidicola subsp. Cinara cedri (strain Cc).